Consider the following 548-residue polypeptide: Ankyrin repeat domain-containing protein SOWAHA (548 aa).

The N-terminal stretch at 1–19 is a signal peptide; the sequence is MALAAAAAAAAAAAGVSQA. Residues 114–212 are disordered; that stretch reads EDNCAPGAPH…PPTAQVPPQK (99 aa). The span at 136–153 shows a compositional bias: polar residues; sequence SAPSELQHTPETLPSEVT. Pro residues predominate over residues 198-212; that stretch reads GPEPAPPTAQVPPQK. Serine 258 is modified (phosphoserine). 2 ANK repeats span residues 344–373 and 383–413; these read SGFTALHWAAKNGDREMALQLVEVARRGGA and GGYTPLHLAALHGHEDAAVLLVVRLGAQVHV. A disordered region spans residues 512–548; sequence PRKKTKIRGGLPSFTEISHRSTPGPLAGLVPSLPPPT.

This sequence belongs to the SOWAH family.

This Mus musculus (Mouse) protein is Ankyrin repeat domain-containing protein SOWAHA (Sowaha).